Here is a 382-residue protein sequence, read N- to C-terminus: Serine/threonine-protein kinase (382 aa).

Basic and acidic residues predominate over residues 1–10; it reads MENKQCDHLT. Positions 1-75 are disordered; the sequence is MENKQCDHLT…ASESDEDDDD (75 aa). A compositionally biased stretch (polar residues) spans 12 to 24; that stretch reads WFSTTSDASESMD. Acidic residues predominate over residues 45–75; the sequence is ADEDLYSDISEGDLEYSDCDSASESDEDDDD. Residues 93-379 form the Protein kinase domain; the sequence is YTVIKTLTPG…AEELLSYPMF (287 aa). Residues 99-107 and lysine 122 each bind ATP; that span reads LTPGSEGRV. Aspartate 207 (proton acceptor) is an active-site residue.

The protein belongs to the protein kinase superfamily. Ser/Thr protein kinase family.

The catalysed reaction is L-seryl-[protein] + ATP = O-phospho-L-seryl-[protein] + ADP + H(+). The enzyme catalyses L-threonyl-[protein] + ATP = O-phospho-L-threonyl-[protein] + ADP + H(+). This is Serine/threonine-protein kinase (US2) from Equus caballus (Horse).